The sequence spans 212 residues: Peptide methionine sulfoxide reductase MsrA (212 aa).

Cys-51 is an active-site residue.

This sequence belongs to the MsrA Met sulfoxide reductase family.

The catalysed reaction is L-methionyl-[protein] + [thioredoxin]-disulfide + H2O = L-methionyl-(S)-S-oxide-[protein] + [thioredoxin]-dithiol. It catalyses the reaction [thioredoxin]-disulfide + L-methionine + H2O = L-methionine (S)-S-oxide + [thioredoxin]-dithiol. Functionally, has an important function as a repair enzyme for proteins that have been inactivated by oxidation. Catalyzes the reversible oxidation-reduction of methionine sulfoxide in proteins to methionine. The chain is Peptide methionine sulfoxide reductase MsrA from Vibrio cholerae serotype O1 (strain ATCC 39541 / Classical Ogawa 395 / O395).